Reading from the N-terminus, the 158-residue chain is NAD(P)H-quinone oxidoreductase subunit N (158 aa).

Belongs to the complex I NdhN subunit family. As to quaternary structure, NDH-1 can be composed of about 15 different subunits; different subcomplexes with different compositions have been identified which probably have different functions.

It is found in the cellular thylakoid membrane. The catalysed reaction is a plastoquinone + NADH + (n+1) H(+)(in) = a plastoquinol + NAD(+) + n H(+)(out). It catalyses the reaction a plastoquinone + NADPH + (n+1) H(+)(in) = a plastoquinol + NADP(+) + n H(+)(out). NDH-1 shuttles electrons from an unknown electron donor, via FMN and iron-sulfur (Fe-S) centers, to quinones in the respiratory and/or the photosynthetic chain. The immediate electron acceptor for the enzyme in this species is believed to be plastoquinone. Couples the redox reaction to proton translocation, and thus conserves the redox energy in a proton gradient. Cyanobacterial NDH-1 also plays a role in inorganic carbon-concentration. This Prochlorococcus marinus (strain MIT 9215) protein is NAD(P)H-quinone oxidoreductase subunit N.